The following is a 238-amino-acid chain: Purine nucleoside phosphorylase DeoD-type 1 (238 aa).

Residue His-5 participates in a purine D-ribonucleoside binding. Phosphate is bound by residues Gly-21, Arg-25, Arg-44, and 88–91; that span reads RVGS. Residues 180–182 and 204–205 contribute to the a purine D-ribonucleoside site; these read EME and SD. The Proton donor role is filled by Asp-205.

Belongs to the PNP/UDP phosphorylase family. In terms of assembly, homohexamer; trimer of homodimers.

The catalysed reaction is a purine D-ribonucleoside + phosphate = a purine nucleobase + alpha-D-ribose 1-phosphate. It catalyses the reaction a purine 2'-deoxy-D-ribonucleoside + phosphate = a purine nucleobase + 2-deoxy-alpha-D-ribose 1-phosphate. In terms of biological role, catalyzes the reversible phosphorolytic breakdown of the N-glycosidic bond in the beta-(deoxy)ribonucleoside molecules, with the formation of the corresponding free purine bases and pentose-1-phosphate. The chain is Purine nucleoside phosphorylase DeoD-type 1 from Aliivibrio fischeri (strain ATCC 700601 / ES114) (Vibrio fischeri).